Here is a 656-residue protein sequence, read N- to C-terminus: Pyoverdine export ATP-binding/permease protein PvdT (656 aa).

Positions 6–245 (IDLRGIRKSY…SANPAALQAV (240 aa)) constitute an ABC transporter domain. 43 to 50 (GASGSGKS) is a binding site for ATP. Transmembrane regions (helical) follow at residues 284 to 304 (ALTLLGIVIGVASVVVMLAVG), 538 to 558 (IAAISLLVGGIGVMNIMLMTV), 589 to 609 (LSVVGGLAGIVLALAMGAALL), and 619 to 639 (LSAVIGAFACALVTGVIFGFM).

It belongs to the ABC transporter superfamily. Macrolide exporter (TC 3.A.1.122) family. Part of the tripartite efflux system PvdRT-OpmQ, which is composed of an inner membrane component with both ATPase and permease domains, PvdT, a periplasmic membrane fusion protein, PvdR, and an outer membrane component, OpmQ.

The protein localises to the cell inner membrane. Functionally, part of the tripartite efflux system PvdRT-OpmQ required for the secretion into the extracellular milieu of the siderophore pyoverdine (PVD), which is involved in iron acquisition. This subunit binds PVD and drives its secretion by hydrolyzing ATP. The system is responsible for export of newly synthesized PVD after the final steps of biosynthesis have taken place in the periplasm. It is also responsible for recycling of PVD after internalization of ferri-PVD into the periplasm by the outer-membrane receptor FpvA and release of iron from PVD, thus making PVD available for new cycles of iron uptake. The polypeptide is Pyoverdine export ATP-binding/permease protein PvdT (Pseudomonas syringae pv. tomato (strain ATCC BAA-871 / DC3000)).